A 232-amino-acid chain; its full sequence is Peroxisomal protein PEX21 (232 aa).

Residue Cys5 forms a Glycyl cysteine thioester (Cys-Gly) (interchain with G-Cter in ubiquitin) linkage.

This sequence belongs to the peroxin-21 family. Interacts with PEX7. Monoubiquitinated at Cys-5; acts as a signal for PEX21 extraction and is required for proper export from peroxisomes and recycling.

Its subcellular location is the cytoplasm. The protein resides in the cytosol. It is found in the peroxisome. Mediates peroxisomal import of proteins containing a C-terminal PTS2-type peroxisomal targeting signal via its interaction with PEX7. Interaction with PEX7 only takes place when PEX7 is associated with cargo proteins containing a PTS2 peroxisomal targeting signal. PEX7 along with PTS2-containing cargo proteins are then translocated through the PEX13-PEX14 docking complex together with PEX21. In Candida glabrata (strain ATCC 2001 / BCRC 20586 / JCM 3761 / NBRC 0622 / NRRL Y-65 / CBS 138) (Yeast), this protein is Peroxisomal protein PEX21 (PEX21).